Consider the following 27-residue polypeptide: Conotoxin Lo6/7b (27 aa).

3 disulfides stabilise this stretch: Cys-2–Cys-16, Cys-9–Cys-19, and Cys-15–Cys-26. Tyr-27 carries the post-translational modification Tyrosine amide.

As to expression, expressed by the venom duct.

Its subcellular location is the secreted. Functionally, 1 uM of this toxin does not show any effect on voltage-gated sodium and potassium channels. Does not show antibacterial activity on both Gram-negative and Gram-positive bacteria. This is Conotoxin Lo6/7b from Conasprella longurionis (Cone snail).